The sequence spans 356 residues: Replication factor C subunit 3 (356 aa).

Lys20 carries the N6-acetyllysine modification. Ser125 is subject to Phosphoserine.

This sequence belongs to the activator 1 small subunits family. Subunit of the RFC complex, an heteropentameric complex consisting of a large subunit RFC1 and four small subunits RFC2, RFC3, RFC4 and RFC5; the RFC complex interacts with PCNA. Forms an heterotetrameric complex with RFC2, RFC4 and RFC5; this complex has ATPase activity but is not stimulated by PCNA. The heterotetramer of subunits RFC2, RFC3, RFC4 and RFC5 interacts with RAD17. Interacts with CNTD1; this interaction facilitates crossover formation.

It is found in the nucleus. Subunit of the replication factor C (RFC) complex which acts during elongation of primed DNA templates by DNA polymerases delta and epsilon, and is necessary for ATP-dependent loading of proliferating cell nuclear antigen (PCNA) onto primed DNA. This is Replication factor C subunit 3 (Rfc3) from Mus musculus (Mouse).